We begin with the raw amino-acid sequence, 335 residues long: MAYVTSTQLYNWRFTQDELANQRQECNAAVRRRLSAQYRAKAEVKGGDVPAEPTFLTAEEEFIIVKRYIFAMKELFHQFSDSGLPVDVFGFAATYLKRFYLNNSVMDYFPREMMLTALYLACKAADYPLGLQTFAAHIPRNREHYSEIVVHSELFLMEKLQYDIWIHTPYRPLSGLLVDLLAYRKTQLGEPMTIEAGEVATADMMTSLKKEGYEIIHKWFQTDLCLTHSPSQFALAVLLELGQKHPDLGVEKFVKNSVCEYNSSDELMEQKWTALNEKMEQIQTMIGEFEFLSDLTYGSDLEAVLMQCRNPLYDPLSEEYAAAKEQAEKLMSFLD.

It belongs to the cyclin family. Cyclin C subfamily.

The protein localises to the nucleus. Its function is as follows. Regulates CDK7, the catalytic subunit of the CDK-activating kinase (CAK) enzymatic complex. The protein is Probable cyclin-H (CYCH) of Echinococcus multilocularis (Fox tapeworm).